The chain runs to 333 residues: Tetraacyldisaccharide 4'-kinase (333 aa).

Position 55–62 (55–62) interacts with ATP; the sequence is TAGGNGKT.

It belongs to the LpxK family.

It carries out the reaction a lipid A disaccharide + ATP = a lipid IVA + ADP + H(+). The protein operates within glycolipid biosynthesis; lipid IV(A) biosynthesis; lipid IV(A) from (3R)-3-hydroxytetradecanoyl-[acyl-carrier-protein] and UDP-N-acetyl-alpha-D-glucosamine: step 6/6. Transfers the gamma-phosphate of ATP to the 4'-position of a tetraacyldisaccharide 1-phosphate intermediate (termed DS-1-P) to form tetraacyldisaccharide 1,4'-bis-phosphate (lipid IVA). In Proteus mirabilis (strain HI4320), this protein is Tetraacyldisaccharide 4'-kinase.